A 237-amino-acid chain; its full sequence is Uridylate kinase (237 aa).

Residue 11–14 participates in ATP binding; sequence KLSG. UMP is bound at residue Gly-53. ATP-binding residues include Gly-54 and Arg-58. UMP contacts are provided by residues Asp-73 and 134-141; that span reads TGNPFFTT. Thr-161, Tyr-167, and Asp-170 together coordinate ATP.

The protein belongs to the UMP kinase family. In terms of assembly, homohexamer.

The protein localises to the cytoplasm. The catalysed reaction is UMP + ATP = UDP + ADP. It participates in pyrimidine metabolism; CTP biosynthesis via de novo pathway; UDP from UMP (UMPK route): step 1/1. Inhibited by UTP. Catalyzes the reversible phosphorylation of UMP to UDP. This Nitrosomonas europaea (strain ATCC 19718 / CIP 103999 / KCTC 2705 / NBRC 14298) protein is Uridylate kinase.